A 190-amino-acid polypeptide reads, in one-letter code: Peptidyl-tRNA hydrolase (190 aa).

A tRNA-binding site is contributed by tyrosine 14. The Proton acceptor role is filled by histidine 19. 3 residues coordinate tRNA: tyrosine 63, asparagine 65, and asparagine 112.

Belongs to the PTH family. In terms of assembly, monomer.

Its subcellular location is the cytoplasm. It catalyses the reaction an N-acyl-L-alpha-aminoacyl-tRNA + H2O = an N-acyl-L-amino acid + a tRNA + H(+). Hydrolyzes ribosome-free peptidyl-tRNAs (with 1 or more amino acids incorporated), which drop off the ribosome during protein synthesis, or as a result of ribosome stalling. Its function is as follows. Catalyzes the release of premature peptidyl moieties from peptidyl-tRNA molecules trapped in stalled 50S ribosomal subunits, and thus maintains levels of free tRNAs and 50S ribosomes. The sequence is that of Peptidyl-tRNA hydrolase from Kosmotoga olearia (strain ATCC BAA-1733 / DSM 21960 / TBF 19.5.1).